Reading from the N-terminus, the 201-residue chain is Potassium-transporting ATPase KdpC subunit (201 aa).

A helical transmembrane segment spans residues 7-29 (PALVLLTALTAITGLAYPLAMTG).

It belongs to the KdpC family. The system is composed of three essential subunits: KdpA, KdpB and KdpC.

It localises to the cell inner membrane. In terms of biological role, part of the high-affinity ATP-driven potassium transport (or Kdp) system, which catalyzes the hydrolysis of ATP coupled with the electrogenic transport of potassium into the cytoplasm. This subunit acts as a catalytic chaperone that increases the ATP-binding affinity of the ATP-hydrolyzing subunit KdpB by the formation of a transient KdpB/KdpC/ATP ternary complex. The chain is Potassium-transporting ATPase KdpC subunit from Methylobacterium radiotolerans (strain ATCC 27329 / DSM 1819 / JCM 2831 / NBRC 15690 / NCIMB 10815 / 0-1).